A 316-amino-acid polypeptide reads, in one-letter code: UDP-N-acetyl-2-amino-2-deoxy-D-glucuronate oxidase (316 aa).

Residues 11-13 (GYI), 32-37 (YDINDS), Glu-55, 81-84 (NYLH), 101-102 (EK), Gln-130, and 171-172 (WK) contribute to the NAD(+) site.

It belongs to the Gfo/Idh/MocA family. Homotetramer.

The catalysed reaction is UDP-2-acetamido-2-deoxy-alpha-D-glucuronate + NAD(+) = UDP-2-acetamido-2-deoxy-alpha-D-ribo-hex-3-uluronate + NADH + H(+). It carries out the reaction 2-hydroxyglutarate + NAD(+) = 2-oxoglutarate + NADH + H(+). Its pathway is bacterial outer membrane biogenesis; LPS O-antigen biosynthesis. Its function is as follows. Plays a role in the biosynthesis of B-band O antigen for serotype O5. Catalyzes the NAD-dependent oxidation of UDP-N-acetylglucosaminuronic acid (UDP-D-GlcNAcA) to UDP-2-acetamido-2-deoxy-3-oxo-D-glucuronic acid (UDP-3-oxo-D-GlcNAcA). Cannot use UDP-GlcNAc or UDP-GalNAc as the nucleotide sugar substrate, and can use only poorly UDP-D-glucuronic acid (UDP-GlcA). Undergoes an NAD(+) recycling mechanism using 2-oxoglutarate as an oxidant. The chain is UDP-N-acetyl-2-amino-2-deoxy-D-glucuronate oxidase from Pseudomonas aeruginosa (strain ATCC 15692 / DSM 22644 / CIP 104116 / JCM 14847 / LMG 12228 / 1C / PRS 101 / PAO1).